Consider the following 212-residue polypeptide: 3-isopropylmalate dehydratase small subunit (212 aa).

Belongs to the LeuD family. LeuD type 1 subfamily. As to quaternary structure, heterodimer of LeuC and LeuD.

It catalyses the reaction (2R,3S)-3-isopropylmalate = (2S)-2-isopropylmalate. It participates in amino-acid biosynthesis; L-leucine biosynthesis; L-leucine from 3-methyl-2-oxobutanoate: step 2/4. Functionally, catalyzes the isomerization between 2-isopropylmalate and 3-isopropylmalate, via the formation of 2-isopropylmaleate. This is 3-isopropylmalate dehydratase small subunit from Nitrosomonas eutropha (strain DSM 101675 / C91 / Nm57).